The chain runs to 396 residues: Elongation factor Tu (396 aa).

Residues 10-206 enclose the tr-type G domain; that stretch reads KPHVNVGTIG…ALDTFIPEPT (197 aa). A G1 region spans residues 19–26; sequence GHVDHGKT. A GTP-binding site is contributed by 19-26; it reads GHVDHGKT. Thr26 contacts Mg(2+). Residues 60–64 are G2; it reads GITIS. A G3 region spans residues 81-84; the sequence is DCPG. GTP contacts are provided by residues 81–85 and 136–139; these read DCPGH and NKAD. The tract at residues 136-139 is G4; it reads NKAD. A G5 region spans residues 174–176; that stretch reads SAR.

Belongs to the TRAFAC class translation factor GTPase superfamily. Classic translation factor GTPase family. EF-Tu/EF-1A subfamily. In terms of assembly, monomer.

The protein resides in the cytoplasm. It catalyses the reaction GTP + H2O = GDP + phosphate + H(+). Its function is as follows. GTP hydrolase that promotes the GTP-dependent binding of aminoacyl-tRNA to the A-site of ribosomes during protein biosynthesis. In Xanthomonas oryzae pv. oryzae (strain MAFF 311018), this protein is Elongation factor Tu.